Reading from the N-terminus, the 469-residue chain is Glutamate--tRNA ligase (469 aa).

The 'HIGH' region signature appears at 11-21 (PSPTGFIHLGN). Positions 243-247 (KMSKR) match the 'KMSKS' region motif. K246 lines the ATP pocket.

Belongs to the class-I aminoacyl-tRNA synthetase family. Glutamate--tRNA ligase type 1 subfamily. In terms of assembly, monomer.

The protein localises to the cytoplasm. The enzyme catalyses tRNA(Glu) + L-glutamate + ATP = L-glutamyl-tRNA(Glu) + AMP + diphosphate. Functionally, catalyzes the attachment of glutamate to tRNA(Glu) in a two-step reaction: glutamate is first activated by ATP to form Glu-AMP and then transferred to the acceptor end of tRNA(Glu). The sequence is that of Glutamate--tRNA ligase from Burkholderia lata (strain ATCC 17760 / DSM 23089 / LMG 22485 / NCIMB 9086 / R18194 / 383).